We begin with the raw amino-acid sequence, 1042 residues long: Isoleucine--tRNA ligase (1042 aa).

Residues 48 to 58 (PFATGLPHFGH) carry the 'HIGH' region motif. The 'KMSKS' region motif lies at 594–598 (KMSKS). K597 contacts ATP.

The protein belongs to the class-I aminoacyl-tRNA synthetase family. IleS type 2 subfamily. In terms of assembly, monomer. Zn(2+) serves as cofactor.

The protein resides in the cytoplasm. The enzyme catalyses tRNA(Ile) + L-isoleucine + ATP = L-isoleucyl-tRNA(Ile) + AMP + diphosphate. Functionally, catalyzes the attachment of isoleucine to tRNA(Ile). As IleRS can inadvertently accommodate and process structurally similar amino acids such as valine, to avoid such errors it has two additional distinct tRNA(Ile)-dependent editing activities. One activity is designated as 'pretransfer' editing and involves the hydrolysis of activated Val-AMP. The other activity is designated 'posttransfer' editing and involves deacylation of mischarged Val-tRNA(Ile). The polypeptide is Isoleucine--tRNA ligase (Borrelia garinii subsp. bavariensis (strain ATCC BAA-2496 / DSM 23469 / PBi) (Borreliella bavariensis)).